Consider the following 596-residue polypeptide: Lamin-B2 (596 aa).

The interval 1-20 (MASLPPHAGPATPLSPTRLS) is disordered. The tract at residues 1 to 26 (MASLPPHAGPATPLSPTRLSRLQEKE) is head. T12 bears the Phosphothreonine mark. A Phosphoserine modification is found at S15. The IF rod domain maps to 24–380 (EKEELRELND…KLLEGEEERL (357 aa)). The coil 1A stretch occupies residues 27–61 (ELRELNDRLAHYIDRVRALELENDRLLLRISEKEE). An N6-acetyllysine; alternate modification is found at K59. K59 participates in a covalent cross-link: Glycyl lysine isopeptide (Lys-Gly) (interchain with G-Cter in SUMO2); alternate. The interval 62-73 (VTTREVSGIKTL) is linker 1. The segment at 74-207 (YESELADARR…AFSKSVFEEE (134 aa)) is coil 1B. Glycyl lysine isopeptide (Lys-Gly) (interchain with G-Cter in SUMO2) cross-links involve residues K173 and K233. The segment at 208–234 (VRETRRRHERRLVEVDSSRQQEYDFKM) is linker 2. The segment at 235–378 (AQALEDLRSQ…YRKLLEGEEE (144 aa)) is coil 2. Phosphoserine occurs at positions 294 and 385. The tract at residues 376-440 (EEERLKLSPS…ASRVSSGSRL (65 aa)) is disordered. A tail region spans residues 379–596 (RLKLSPSPSS…RTTSRGCRLM (218 aa)). The span at 382-403 (LSPSPSSRITISRATSSSSSSS) shows a compositional bias: low complexity. T391 is a glycosylation site (O-linked (GlcNAc) threonine). Residues S398, S400, and S402 each carry the phosphoserine modification. R413 carries the omega-N-methylarginine modification. Residues 415-420 (KRRRLE) carry the Nuclear localization signal motif. The span at 425 to 439 (SGSPSRASRVSSGSR) shows a compositional bias: low complexity. Residues 438 to 559 (SRLAQQTVAT…VKAAKHSSVQ (122 aa)) enclose the LTD domain. K465 is covalently cross-linked (Glycyl lysine isopeptide (Lys-Gly) (interchain with G-Cter in SUMO2)). S473 is subject to Phosphoserine. Residues 552 to 596 (AAKHSSVQGRENGEEEEEEEAEFGEEDLFHQQGDPRTTSRGCRLM) are disordered. The span at 564 to 577 (GEEEEEEEAEFGEE) shows a compositional bias: acidic residues. Polar residues predominate over residues 585 to 596 (DPRTTSRGCRLM). Residue C593 is modified to Cysteine methyl ester. C593 carries S-farnesyl cysteine lipidation. Residues 594-596 (RLM) constitute a propeptide, removed in mature form.

It belongs to the intermediate filament family. As to quaternary structure, dimer. Lamin dimers then assemble into dimeric head-to-tail polymers. Ultimately, two head-to-tail polymers assemble laterally into a protofilament with a uniformly shaped rod of 3.5 nm in diameter. Interacts with TMEM43. In terms of processing, B-type lamins undergo a series of modifications, such as farnesylation and phosphorylation. Increased phosphorylation of the lamins occurs before envelope disintegration and probably plays a role in regulating lamin associations. Post-translationally, phosphorylation plays a key role in lamin organization, subcellular localization and nuclear envelope disintegration. Phosphorylation by CDK1 at Ser-15 and Ser-385 at the onset of mitosis drives lamin disassembly and nuclear envelope breakdown. As to expression, germ cell-specific.

The protein resides in the nucleus lamina. In terms of biological role, lamins are intermediate filament proteins that assemble into a filamentous meshwork, and which constitute the major components of the nuclear lamina, a fibrous layer on the nucleoplasmic side of the inner nuclear membrane. Lamins provide a framework for the nuclear envelope, bridging the nuclear envelope and chromatin, thereby playing an important role in nuclear assembly, chromatin organization, nuclear membrane and telomere dynamics. The structural integrity of the lamina is strictly controlled by the cell cycle, as seen by the disintegration and formation of the nuclear envelope in prophase and telophase, respectively. This Mus musculus (Mouse) protein is Lamin-B2 (Lmnb2).